Here is a 463-residue protein sequence, read N- to C-terminus: ATP synthase subunit beta (463 aa).

Residue Gly151–Thr158 participates in ATP binding.

This sequence belongs to the ATPase alpha/beta chains family. As to quaternary structure, F-type ATPases have 2 components, CF(1) - the catalytic core - and CF(0) - the membrane proton channel. CF(1) has five subunits: alpha(3), beta(3), gamma(1), delta(1), epsilon(1). CF(0) has three main subunits: a(1), b(2) and c(9-12). The alpha and beta chains form an alternating ring which encloses part of the gamma chain. CF(1) is attached to CF(0) by a central stalk formed by the gamma and epsilon chains, while a peripheral stalk is formed by the delta and b chains.

Its subcellular location is the cell membrane. It catalyses the reaction ATP + H2O + 4 H(+)(in) = ADP + phosphate + 5 H(+)(out). Produces ATP from ADP in the presence of a proton gradient across the membrane. The catalytic sites are hosted primarily by the beta subunits. This chain is ATP synthase subunit beta, found in Clostridium botulinum (strain Okra / Type B1).